Reading from the N-terminus, the 201-residue chain is ADP-ribosylation factor-related protein 1 (201 aa).

An N-acetylmethionine modification is found at M1. GTP contacts are provided by residues 24–31 (GLDNAGKT), 75–79 (DLGGQ), and 134–137 (NKQD).

Belongs to the small GTPase superfamily. Arf family. As to quaternary structure, interacts with SYS1.

The protein localises to the golgi apparatus. Its subcellular location is the trans-Golgi network. In terms of biological role, trans-Golgi-associated GTPase that regulates protein sorting. Controls the targeting of ARL1 and its effector to the trans-Golgi. Required for the lipidation of chylomicrons in the intestine and required for VLDL lipidation in the liver. This chain is ADP-ribosylation factor-related protein 1 (Arfrp1), found in Mus musculus (Mouse).